Here is a 108-residue protein sequence, read N- to C-terminus: Phosphoribosyl-ATP pyrophosphatase (108 aa).

This sequence belongs to the PRA-PH family.

It is found in the cytoplasm. It catalyses the reaction 1-(5-phospho-beta-D-ribosyl)-ATP + H2O = 1-(5-phospho-beta-D-ribosyl)-5'-AMP + diphosphate + H(+). It functions in the pathway amino-acid biosynthesis; L-histidine biosynthesis; L-histidine from 5-phospho-alpha-D-ribose 1-diphosphate: step 2/9. This chain is Phosphoribosyl-ATP pyrophosphatase, found in Dechloromonas aromatica (strain RCB).